The primary structure comprises 447 residues: Ion-translocating oxidoreductase complex subunit C (447 aa).

2 consecutive 4Fe-4S ferredoxin-type domains span residues 359–389 (AEVL…GRIA) and 399–430 (RCRE…LIRY). 8 residues coordinate [4Fe-4S] cluster: C369, C372, C375, C379, C408, C411, C414, and C418.

It belongs to the 4Fe4S bacterial-type ferredoxin family. RnfC subfamily. As to quaternary structure, the Rnf complex is probably composed of eight subunits, including RnfA, RnfB, RnfC, RnfD, RnfE and RnfG. [4Fe-4S] cluster is required as a cofactor.

It is found in the cell membrane. In terms of biological role, part of a membrane-bound complex that couples electron transfer with translocation of ions across the membrane. Catalyzes Na(+) transport, most probably coupled to electron transfer from reduced ferredoxin to methanophenazine and heterodisulfide reductase. Involved in heterodisulfide reduction during methanogenesis from acetate. The sequence is that of Ion-translocating oxidoreductase complex subunit C from Methanosarcina acetivorans (strain ATCC 35395 / DSM 2834 / JCM 12185 / C2A).